We begin with the raw amino-acid sequence, 295 residues long: Phosphatidylglycerol--prolipoprotein diacylglyceryl transferase (295 aa).

7 consecutive transmembrane segments (helical) span residues 17 to 37, 57 to 77, 92 to 112, 127 to 147, 196 to 216, 222 to 242, and 255 to 275; these read IKVHWYGIMYLLGFTAAWLLG, LLFYAMLGVVLGGRIGYMLFY, VWDGGMSFHGGLLGVIAACWW, FMAPLVPLGLGFGRIGNFIGA, QLYEALLEGLVMFVVLWAVSA, YLVGGLFALMYGLFRFAVEFV, and WLTRGQILSLPLIAFGLVLLV. Arg140 is an a 1,2-diacyl-sn-glycero-3-phospho-(1'-sn-glycerol) binding site.

Belongs to the Lgt family.

The protein resides in the cell inner membrane. The catalysed reaction is L-cysteinyl-[prolipoprotein] + a 1,2-diacyl-sn-glycero-3-phospho-(1'-sn-glycerol) = an S-1,2-diacyl-sn-glyceryl-L-cysteinyl-[prolipoprotein] + sn-glycerol 1-phosphate + H(+). It functions in the pathway protein modification; lipoprotein biosynthesis (diacylglyceryl transfer). In terms of biological role, catalyzes the transfer of the diacylglyceryl group from phosphatidylglycerol to the sulfhydryl group of the N-terminal cysteine of a prolipoprotein, the first step in the formation of mature lipoproteins. The polypeptide is Phosphatidylglycerol--prolipoprotein diacylglyceryl transferase (Stenotrophomonas maltophilia (strain R551-3)).